The sequence spans 196 residues: V-type proton ATPase subunit E (196 aa).

It belongs to the V-ATPase E subunit family.

Produces ATP from ADP in the presence of a proton gradient across the membrane. The protein is V-type proton ATPase subunit E of Clostridium botulinum (strain Eklund 17B / Type B).